Reading from the N-terminus, the 209-residue chain is Ribosomal RNA large subunit methyltransferase E (209 aa).

5 residues coordinate S-adenosyl-L-methionine: G63, W65, D83, D99, and D124. K164 (proton acceptor) is an active-site residue.

This sequence belongs to the class I-like SAM-binding methyltransferase superfamily. RNA methyltransferase RlmE family.

The protein resides in the cytoplasm. The catalysed reaction is uridine(2552) in 23S rRNA + S-adenosyl-L-methionine = 2'-O-methyluridine(2552) in 23S rRNA + S-adenosyl-L-homocysteine + H(+). Functionally, specifically methylates the uridine in position 2552 of 23S rRNA at the 2'-O position of the ribose in the fully assembled 50S ribosomal subunit. The sequence is that of Ribosomal RNA large subunit methyltransferase E from Pseudoalteromonas translucida (strain TAC 125).